Here is a 203-residue protein sequence, read N- to C-terminus: Ribosome maturation factor RimP (203 aa).

The segment at 183–203 is disordered; that stretch reads FDDIETEGSAEGTTGSEEENK.

This sequence belongs to the RimP family.

The protein resides in the cytoplasm. In terms of biological role, required for maturation of 30S ribosomal subunits. The protein is Ribosome maturation factor RimP of Ruegeria sp. (strain TM1040) (Silicibacter sp.).